A 238-amino-acid chain; its full sequence is ATP synthase subunit O, mitochondrial (238 aa).

The transit peptide at 1–36 directs the protein to the mitochondrion; that stretch reads MANRFRSGISFFKTIAVTDSVSSVRSKSLFPALRTY. Position 90 is a phosphothreonine (T90).

The protein belongs to the ATPase delta chain family. F-type ATPases have 2 components, CF(1) - the catalytic core - and CF(0) - the membrane proton channel. CF(1) has five subunits: alpha(3), beta(3), gamma(1), delta(1), epsilon(1). CF(0) has three main subunits: a, b and c.

It is found in the mitochondrion. Its subcellular location is the mitochondrion inner membrane. Its function is as follows. Mitochondrial membrane ATP synthase (F(1)F(0) ATP synthase or Complex V) produces ATP from ADP in the presence of a proton gradient across the membrane which is generated by electron transport complexes of the respiratory chain. F-type ATPases consist of two structural domains, F(1) - containing the extramembraneous catalytic core and F(0) - containing the membrane proton channel, linked together by a central stalk and a peripheral stalk. During catalysis, ATP synthesis in the catalytic domain of F(1) is coupled via a rotary mechanism of the central stalk subunits to proton translocation. Part of the complex F(0) domain and the peripheric stalk, which acts as a stator to hold the catalytic alpha(3)beta(3) subcomplex and subunit a/ATP6 static relative to the rotary elements. The sequence is that of ATP synthase subunit O, mitochondrial from Arabidopsis thaliana (Mouse-ear cress).